A 264-amino-acid polypeptide reads, in one-letter code: Virulence plasmid protein pGP3-D (264 aa).

The protein is Virulence plasmid protein pGP3-D of Chlamydia muridarum (strain MoPn / Nigg).